Here is a 192-residue protein sequence, read N- to C-terminus: Probable cobalt-precorrin-6B C(15)-methyltransferase (decarboxylating) (192 aa).

S-adenosyl-L-methionine-binding positions include threonine 20, 44 to 48 (GSGTG), glutamate 68, and alanine 96.

It belongs to the methyltransferase superfamily. Archaeal-type CbiT family.

It catalyses the reaction Co-precorrin-6B + S-adenosyl-L-methionine = Co-precorrin-7 + S-adenosyl-L-homocysteine + CO2. It participates in cofactor biosynthesis; adenosylcobalamin biosynthesis; cob(II)yrinate a,c-diamide from sirohydrochlorin (anaerobic route): step 8/10. Catalyzes the methylation of C-15 in cobalt-precorrin-6B followed by the decarboxylation of C-12 to form cobalt-precorrin-7. This Sulfurisphaera tokodaii (strain DSM 16993 / JCM 10545 / NBRC 100140 / 7) (Sulfolobus tokodaii) protein is Probable cobalt-precorrin-6B C(15)-methyltransferase (decarboxylating).